The following is a 318-amino-acid chain: MSSLPGSREPLLRVAVTGGTHGNEMCGVYLARYWLQNPGELQRPSFSAMPVLANPAATAACCRYLDRDLNRSCTLTFLGSTATPDDPYEVKRARELNQLLGPKGTGQAFDFTLDLHNTTANTGVCLISESNISFNLHLCHYLQRQNPGMPCRLFLYEPAGTETFSVESISKNGICLEMGPQPQGVLRADLFSRMRALVASILDFIELFNQGMDLPAFEMDIYRNLGSVDFPRTADGDLAGTVHPQLQDHDFEPLRPGEPIFKLFSGEDVLYEGDSIVYPVFINEAAYYEKHVAFLKSEKIRVTVPALLRLTPRSTQTP.

The interval 1–210 (MSSLPGSREP…ILDFIELFNQ (210 aa)) is hydrolytic domain. Zn(2+)-binding residues include histidine 21 and glutamate 24. Substrate-binding positions include arginine 63 and 70-71 (NR). A Zn(2+)-binding site is contributed by histidine 116. The substrate site is built by glutamate 177 and tyrosine 287. Residues 211–318 (GMDLPAFEMD…RLTPRSTQTP (108 aa)) form a shielding domain region. At threonine 317 the chain carries Phosphothreonine.

The protein belongs to the AspA/AstE family. Aspartoacylase subfamily. Exists as a mixture of homodimers and homotetramer, both catalytically active. The cofactor is Zn(2+). As to expression, expressed predominantly in kidney and to a lesser extent in liver. Weakly expressed in heart, small intestine, brain, lung, testis, and stomach.

The protein localises to the apical cell membrane. Its subcellular location is the cytoplasm. It carries out the reaction an N-acyl-aromatic L-alpha-amino acid + H2O = an aromatic L-alpha-amino acid + a carboxylate. The catalysed reaction is an N-acetyl-L-cysteine-S-conjugate + H2O = an S-substituted L-cysteine + acetate. Plays an important role in deacetylating mercapturic acids in kidney proximal tubules. Also acts on N-acetyl-aromatic amino acids. The chain is N-acyl-aromatic-L-amino acid amidohydrolase (carboxylate-forming) (Acy3) from Mus musculus (Mouse).